The following is a 326-amino-acid chain: Vitamin B12 import system permease protein BtuC (326 aa).

The next 9 membrane-spanning stretches (helical) occupy residues 19–39 (LSVL…LWIL), 61–81 (LAVL…QALF), 88–108 (PGLL…VLLG), 112–132 (LPNW…TLIL), 146–166 (LLAG…AIYF), 184–204 (GGVD…LLWI), 240–260 (GWMV…GLVI), 274–294 (VLLP…DIVA), and 302–322 (ELPI…WLLL).

It belongs to the binding-protein-dependent transport system permease family. FecCD subfamily. In terms of assembly, the complex is composed of two ATP-binding proteins (BtuD), two transmembrane proteins (BtuC) and a solute-binding protein (BtuF).

The protein localises to the cell inner membrane. Part of the ABC transporter complex BtuCDF involved in vitamin B12 import. Involved in the translocation of the substrate across the membrane. The protein is Vitamin B12 import system permease protein BtuC of Escherichia coli O6:K15:H31 (strain 536 / UPEC).